The sequence spans 528 residues: Succinate-semialdehyde dehydrogenase, mitochondrial (528 aa).

Residues 1 to 34 constitute a mitochondrion transit peptide; the sequence is MVIGAAARVAIGGCRKLISSHTSLLLVSSQCRQM. Residue 196 to 198 coordinates NAD(+); sequence TPW. Arg-207 contacts substrate. Residues 222–225, 275–280, and Glu-297 contribute to the NAD(+) site; these read KPSE and GSTAVG. Residue Glu-297 is the Proton acceptor of the active site. Arg-325 lines the substrate pocket. Cys-331 serves as the catalytic Nucleophile. Cys-331 and Cys-333 are disulfide-bonded. Residue 428–430 participates in NAD(+) binding; the sequence is EIF. Residue Ser-488 participates in substrate binding.

It belongs to the aldehyde dehydrogenase family. In terms of assembly, homotetramer. Expressed in developing leaf tissues.

Its subcellular location is the mitochondrion matrix. The enzyme catalyses succinate semialdehyde + NAD(+) + H2O = succinate + NADH + 2 H(+). The protein operates within amino-acid degradation; 4-aminobutanoate degradation. Competitive inhibition by NADH. Inhibited by ATP, ADP and AMP. Redox-regulated. Inhibited under oxydizing conditions. Functionally, oxidizes specifically succinate semialdehyde. Involved in plant response to environmental stress by preventing the accumulation of reactive oxygen species, probably by regulating proline, gamma-hydroxybutyrate (GHB) and gamma-aminobutyrate (GABA) levels. Required for the maintenance of the shoot apical meristem (SAM) structure and subsequent adaxial-abaxial axis-dependent development of cotyledons and leaves. This is Succinate-semialdehyde dehydrogenase, mitochondrial from Arabidopsis thaliana (Mouse-ear cress).